The primary structure comprises 368 residues: MKLNLVGLGRNTPIYILEKFDFDEQEFFSSLKVKTTEVAVLKTCHRREIYYIGDKEPLTINEIIEPYIIRKSGIDVVRHLFKVSCGLDSMVLGEHQILSQVKNTHKNFCHGKILNKLFNEAVSLGKEARTKTGINKYPLSISYIAVKLIEEQINIEGKKIFVIGTGMMGQKVIKYLVSRGADIYISNRTIKKAYEIKKMFSEVNIVDFEEKYKHISSSDVVISATNAPHYVVEEKKVNSQKNIIFIDLSMPRNIEPSIKEYHTLYTLEDLNEISKKYNKLRQEKISTIQNLIETRIKKFLTWYKLQTVKDDILYIQNLAEKLVYEEIEKLSKKILLDDNSLKQIQKSLKSCTKKIVSYHINYIKEKVI.

Residues 43-46 (TCHR), S89, 94-96 (EHQ), and Q100 each bind substrate. Catalysis depends on C44, which acts as the Nucleophile. 164 to 169 (GTGMMG) contacts NADP(+).

Belongs to the glutamyl-tRNA reductase family. As to quaternary structure, homodimer.

It carries out the reaction (S)-4-amino-5-oxopentanoate + tRNA(Glu) + NADP(+) = L-glutamyl-tRNA(Glu) + NADPH + H(+). It participates in porphyrin-containing compound metabolism; protoporphyrin-IX biosynthesis; 5-aminolevulinate from L-glutamyl-tRNA(Glu): step 1/2. Its function is as follows. Catalyzes the NADPH-dependent reduction of glutamyl-tRNA(Glu) to glutamate 1-semialdehyde (GSA). The protein is Glutamyl-tRNA reductase of Thermosipho melanesiensis (strain DSM 12029 / CIP 104789 / BI429).